The following is a 283-amino-acid chain: Large ribosomal subunit protein uL4 (283 aa).

The protein belongs to the universal ribosomal protein uL4 family. In terms of assembly, part of the 50S ribosomal subunit.

One of the primary rRNA binding proteins, this protein initially binds near the 5'-end of the 23S rRNA. It is important during the early stages of 50S assembly. It makes multiple contacts with different domains of the 23S rRNA in the assembled 50S subunit and ribosome. Its function is as follows. Forms part of the polypeptide exit tunnel. This Pyrobaculum aerophilum (strain ATCC 51768 / DSM 7523 / JCM 9630 / CIP 104966 / NBRC 100827 / IM2) protein is Large ribosomal subunit protein uL4.